The following is a 2301-amino-acid chain: Genome polyprotein (2301 aa).

The segment at 3–14 is a zinc-finger region; sequence CKHGYPDVCPIC. The segment at 30–46 is acidic; that stretch reads DGEWFPTDLLCVDLDDD. A theilo region spans residues 60 to 73; it reads MEWTDLPLVRDIVM. G77 is lipidated: N-myristoyl glycine; by host. C501 and C503 form a disulfide bridge. The interval 1039-1045 is host EIF4E binding; it reads YYKQRLI. One can recognise an SF3 helicase domain in the interval 1281-1446; that stretch reads IPLASLCEKF…CTTSNGMLDI (166 aa). 1310-1317 lines the ATP pocket; that stretch reads GAAGQGKS. At Y1606 the chain carries O-(5'-phospho-RNA)-tyrosine. In terms of domain architecture, Peptidase C3 spans 1634–1827; that stretch reads NPVMDFELFC…AATIITRELI (194 aa). Catalysis depends on for protease 3C activity residues H1678, D1712, and C1791. A RdRp catalytic domain is found at 2069-2187; that stretch reads NYVYDVDYSN…GTNYQIDFNL (119 aa). Active-site for RdRp activity residues include D2075 and D2173.

Belongs to the picornaviruses polyprotein family. In terms of assembly, interacts with host EIF4E. Interacts with the leader protein. As to quaternary structure, interacts with host RAN; the complex L-RAN recruits cellular kinases responsible for the L-induced nucleocytoplasmic trafficking inhibition. The complex L-RAN can further bind to the host exportins XPO1/CRM1 and CSE1L/CAS. Interacts with the protein 2A. Interacts with host RNASEL; this interaction prevents RNASEL activation by its substrate 2'-5' oligoadenylates. Post-translationally, phosphorylated. In terms of processing, specific enzymatic cleavages by the viral protease in vivo yield a variety of precursors and mature proteins. The polyprotein seems to be cotranslationally cleaved at the 2A/2B junction by a ribosomal skip from one codon to the next without formation of a peptide bond. This process would release the P1-2A peptide from the translational complex. During virion maturation, immature virions are rendered infectious following cleavage of VP0 into VP4 and VP2. This maturation seems to be an autocatalytic event triggered by the presence of RNA in the capsid and is followed by a conformational change of the particle. Post-translationally, uridylylated by the polymerase and is covalently linked to the 5'-end of genomic RNA. This uridylylated form acts as a nucleotide-peptide primer for the polymerase. In terms of processing, myristoylation is required during RNA encapsidation and formation of the mature virus particle.

The protein resides in the virion. The protein localises to the host cytoplasm. It is found in the host nucleus. Its subcellular location is the host nucleolus. It localises to the host cytoplasmic vesicle membrane. The catalysed reaction is RNA(n) + a ribonucleoside 5'-triphosphate = RNA(n+1) + diphosphate. It catalyses the reaction ATP + H2O = ADP + phosphate + H(+). It carries out the reaction Selective cleavage of Gln-|-Gly bond in the poliovirus polyprotein. In other picornavirus reactions Glu may be substituted for Gln, and Ser or Thr for Gly.. Forms a complex with host RAN and probably binds to exportins carrying activated MAPK in order to mediate the hyperphosphorylation of host Phe/Gly containing nuclear pore proteins (Nups) resulting in cessation of active nucleocytoplasmic transport. Proteins with NLS signals fail to import, cellular mRNAs fail to export, and some proteins small enough for diffusion are not retained anymore (efflux). The resulting inhibition of cellular protein synthesis serves to ensure maximal viral gene expression and to evade host immune response. The leader protein also inhibits host interferon regulatory factor 3 (IRF3) dimerization, thereby blocking the transcriptional activation of IFN genes. Binds to host RNase L thereby preventing its activation by 2'-5' oligoadenylates in order to counteract the antiviral interferon-inducible OAS/RNase L pathway. Its function is as follows. Forms an icosahedral capsid of pseudo T=3 symmetry with capsid proteins VP2 and VP3. Together they form an icosahedral capsid composed of 60 copies of each VP1, VP2, and VP3, with a diameter of approximately 300 Angstroms. VP4 lies on the inner surface of the protein shell formed by VP1, VP2 and VP3. All the three latter proteins contain a beta-sheet structure called beta-barrel jelly roll. VP1 is situated at the 12 fivefold axes, whereas VP2 and VP3 are located at the quasi-sixfold axes. In terms of biological role, lies on the inner surface of the capsid shell. After binding to the host receptor, the capsid undergoes conformational changes. Capsid protein VP4 is released, capsid protein VP1 N-terminus is externalized, and together, they shape a pore in the host membrane through which the viral genome is translocated into the host cell cytoplasm. After genome has been released, the channel shrinks. Functionally, VP0 precursor is a component of immature procapsids. Involved in host translation shutoff by inhibiting cap-dependent mRNA translation. Nuclear localization is required for this function. The resulting inhibition of cellular protein synthesis serves to ensure maximal viral gene expression and to evade host immune response. Inhibits the phosphorylation of the leader protein. Its function is as follows. Affects membrane integrity and causes an increase in membrane permeability. In terms of biological role, associates with and induces structural rearrangements of intracellular membranes. It displays RNA-binding, nucleotide binding and NTPase activities. Functionally, serves as membrane anchor via its hydrophobic domain. Forms a primer, VPg-pU, which is utilized by the polymerase for the initiation of RNA chains. Its function is as follows. Cysteine protease that generates mature viral proteins from the precursor polyprotein. In addition to its proteolytic activity, it binds to viral RNA, and thus influences viral genome replication. RNA and substrate cooperatively bind to the protease. Cleaves host PABP1, this cleavage is important for viral replication. In terms of biological role, replicates the genomic and antigenomic RNAs by recognizing replications specific signals. Performs VPg uridylylation. This is Genome polyprotein from Theiler's murine encephalomyelitis virus (strain DA) (TMEV).